A 395-amino-acid polypeptide reads, in one-letter code: Long-chain-alcohol dehydrogenase 1 (395 aa).

NAD(+)-binding positions include 98 to 102 (GSALD) and 141 to 144 (TTSG).

It belongs to the iron-containing alcohol dehydrogenase family. In terms of assembly, homooctamer.

The catalysed reaction is glycerol + NAD(+) = dihydroxyacetone + NADH + H(+). It carries out the reaction a long-chain primary fatty alcohol + 2 NAD(+) + H2O = a long-chain fatty acid + 2 NADH + 3 H(+). In terms of biological role, long-chain alkyl alcohol dehydrogenase that can oxidize a broad range of alkyl alcohols from ethanol to 1-triacontanol (C2 to C30) as well as 1,3-propanediol and acetaldehyde. The best substrate is ethanol. Also oxidizes glycerol. In Geobacillus thermodenitrificans (strain NG80-2), this protein is Long-chain-alcohol dehydrogenase 1 (adh1).